Reading from the N-terminus, the 383-residue chain is Embryonic pepsinogen (383 aa).

The signal sequence occupies residues 1-16; it reads MRSLALLCAVLALSDG. One can recognise a Peptidase A1 domain in the interval 76 to 380; sequence YYGTISIGTP…DRANNRVGLA (305 aa). Asp-94 is an active-site residue. Cys-107 and Cys-112 are oxidised to a cystine. Asn-132 and Asn-204 each carry an N-linked (GlcNAc...) asparagine glycan. Cys-267 and Cys-271 are oxidised to a cystine. The active site involves Asp-276. Asn-309 carries an N-linked (GlcNAc...) asparagine glycan. Cys-310 and Cys-344 are disulfide-bonded. An N-linked (GlcNAc...) asparagine glycan is attached at Asn-350.

It belongs to the peptidase A1 family.

In Gallus gallus (Chicken), this protein is Embryonic pepsinogen.